A 400-amino-acid polypeptide reads, in one-letter code: MGCDVSRPQRITVLGATGSIGLSTLDVIARHPDRYQAFALTGYSRIDELLALCVRHRPAFAVVPSTEAAVRLRAGLAAAGCTTEVLEGEAGLCQVASAAEVDAVMAAIVGAAGLRPTLAAVEAGKKVLLANKEALVMSGALFMEAVRQKGAVLLPIDSEHNAIFQCMPGDYARGLSAVGVRRILLTASGGPFRETPVEALLDVTPEQACAHPNWSMGRKISVDSASMMNKGLELIEACWLFDAVPSKVEVVVHPQSVIHSLVDYVDGSVLAQLGNPDMRTPIANALAWPERIDSGVAPLDLFAIARLDFQAPDEQRFPCLRLARQAAEAGNSAPAVLNAANEVAVEAFLERRIRFPEIAGMIEQVLDQEPVVPLPSLDAVFAADQRARELSREWLRRHGR.

Positions 17, 18, 19, 20, and 131 each coordinate NADPH. Residue Lys-132 participates in 1-deoxy-D-xylulose 5-phosphate binding. Glu-133 is a binding site for NADPH. Asp-157 serves as a coordination point for Mn(2+). Residues Ser-158, Glu-159, Ser-188, and His-211 each contribute to the 1-deoxy-D-xylulose 5-phosphate site. Glu-159 lines the Mn(2+) pocket. Residue Gly-217 coordinates NADPH. Ser-224, Asn-229, Lys-230, and Glu-233 together coordinate 1-deoxy-D-xylulose 5-phosphate. Glu-233 is a binding site for Mn(2+).

Belongs to the DXR family. It depends on Mg(2+) as a cofactor. The cofactor is Mn(2+).

The enzyme catalyses 2-C-methyl-D-erythritol 4-phosphate + NADP(+) = 1-deoxy-D-xylulose 5-phosphate + NADPH + H(+). The protein operates within isoprenoid biosynthesis; isopentenyl diphosphate biosynthesis via DXP pathway; isopentenyl diphosphate from 1-deoxy-D-xylulose 5-phosphate: step 1/6. In terms of biological role, catalyzes the NADPH-dependent rearrangement and reduction of 1-deoxy-D-xylulose-5-phosphate (DXP) to 2-C-methyl-D-erythritol 4-phosphate (MEP). In Pseudomonas putida (strain ATCC 700007 / DSM 6899 / JCM 31910 / BCRC 17059 / LMG 24140 / F1), this protein is 1-deoxy-D-xylulose 5-phosphate reductoisomerase.